We begin with the raw amino-acid sequence, 218 residues long: Flagellin B1 (218 aa).

A propeptide spanning residues 1–12 (MNIKEFLSNKKG) is cleaved from the precursor. N-linked (GlcNAc...) asparagine glycans are attached at residues asparagine 38, asparagine 71, asparagine 77, asparagine 115, and asparagine 136.

The protein belongs to the archaeal flagellin family. N-linked glycans consist of the 779 Da trisaccharide beta-ManNAc(Thr)-(1-4)-beta-GlcNAc3NAcA-(1-3)-beta-GlcNAc.

The protein localises to the archaeal flagellum. Functionally, flagellin is the subunit protein which polymerizes to form the filaments of archaeal flagella. This chain is Flagellin B1 (flaB1), found in Methanococcus voltae.